Consider the following 121-residue polypeptide: Large ribosomal subunit protein uL18 (121 aa).

It belongs to the universal ribosomal protein uL18 family. As to quaternary structure, part of the 50S ribosomal subunit; part of the 5S rRNA/L5/L18/L25 subcomplex. Contacts the 5S and 23S rRNAs.

This is one of the proteins that bind and probably mediate the attachment of the 5S RNA into the large ribosomal subunit, where it forms part of the central protuberance. This Anaplasma phagocytophilum (strain HZ) protein is Large ribosomal subunit protein uL18.